We begin with the raw amino-acid sequence, 107 residues long: UPF0145 protein Memar_1285 (107 aa).

It belongs to the UPF0145 family.

The sequence is that of UPF0145 protein Memar_1285 from Methanoculleus marisnigri (strain ATCC 35101 / DSM 1498 / JR1).